A 166-amino-acid chain; its full sequence is AP-3 complex subunit sigma (166 aa).

This sequence belongs to the adaptor complexes small subunit family. In terms of assembly, adaptor protein complex 3 (AP-3) is a heterotetramer composed of two large adaptins (delta-type subunit and beta-type subunit), a medium adaptin (mu-type subunit) and a small adaptin (sigma-type subunit).

The protein localises to the cytoplasm. It localises to the golgi apparatus. Its subcellular location is the cytoplasmic vesicle membrane. In terms of biological role, part of the AP-3 complex, an adaptor-related complex which seems to be clathrin-associated. The complex is associated with the Golgi region as well as more peripheral structures. It facilitates the budding of vesicles from the Golgi membrane and may be directly involved in trafficking to the vacuole. It also function in maintaining the identity of lytic vacuoles and in regulating the transition between storage and lytic vacuoles. This is AP-3 complex subunit sigma from Arabidopsis thaliana (Mouse-ear cress).